A 250-amino-acid chain; its full sequence is 2,3-bisphosphoglycerate-dependent phosphoglycerate mutase (250 aa).

Residues 10–17 (RHGESQWN), 23–24 (TG), R62, 89–92 (ERHY), K100, 116–117 (RR), and 185–186 (GN) contribute to the substrate site. H11 functions as the Tele-phosphohistidine intermediate in the catalytic mechanism. E89 serves as the catalytic Proton donor/acceptor.

The protein belongs to the phosphoglycerate mutase family. BPG-dependent PGAM subfamily. In terms of assembly, homodimer.

It carries out the reaction (2R)-2-phosphoglycerate = (2R)-3-phosphoglycerate. Its pathway is carbohydrate degradation; glycolysis; pyruvate from D-glyceraldehyde 3-phosphate: step 3/5. Catalyzes the interconversion of 2-phosphoglycerate and 3-phosphoglycerate. This Sodalis glossinidius (strain morsitans) protein is 2,3-bisphosphoglycerate-dependent phosphoglycerate mutase.